Here is a 290-residue protein sequence, read N- to C-terminus: Protein male abnormal 3 (290 aa).

2 consecutive DNA-binding regions (DM) follow at residues 28–74 and 94–142; these read CQRC…SKKK and CARC…KLRR. 2 disordered regions span residues 139-167 and 179-202; these read KLRR…MDME and IIGT…LSMS. The segment covering 146 to 155 has biased composition (basic and acidic residues); that stretch reads KSRDGKEPKR. Residues 182 to 202 are compositionally biased toward low complexity; sequence TSASPSPSSTTDTMSPSLSMS.

As to expression, expression is undetectable in hermaphrodites, but persists in males. In males, expressed in cells of the tail tip.

It localises to the nucleus. Transcription factor which binds the DNA motif 5'-[CGA][TCA][TA]ACAATGT[AT][TGA]C-3', probably as a monomer. Acts partially redundantly with the transcription factor dmd-3 to coordinate tail tip cell fusion and retraction and thereby regulate male tail tip morphogenesis. Promotes male-specific development of two tissues, the peripheral nervous system and the intestine. In the peripheral nervous system, directs differentiation of sensory ray neuroblasts into peripheral sense organs. In the intestine, causes repression of vitellogenin gene transcription. The protein is Protein male abnormal 3 of Caenorhabditis elegans.